The sequence spans 486 residues: Homoserine O-acetyltransferase (486 aa).

The AB hydrolase-1 domain maps to 66 to 436 (NVLVICHALT…PEGHDAFLLE (371 aa)). Ser162 is an active-site residue. Ser162 serves as the catalytic Nucleophile. Residues 248-274 (KFSRRSPSIAQQQKAQKAEVRKPSTVS) are disordered. Residues 250–262 (SRRSPSIAQQQKA) are compositionally biased toward polar residues. Catalysis depends on residues Asp401 and His430.

This sequence belongs to the AB hydrolase superfamily. MetX family.

It catalyses the reaction L-homoserine + acetyl-CoA = O-acetyl-L-homoserine + CoA. Its pathway is amino-acid biosynthesis; L-methionine biosynthesis via de novo pathway; O-acetyl-L-homoserine from L-homoserine: step 1/1. In terms of biological role, commits homoserine to the methionine biosynthesis pathway by catalyzing its O-acetylation. The polypeptide is Homoserine O-acetyltransferase (MET2) (Saccharomyces pastorianus (Lager yeast)).